A 546-amino-acid chain; its full sequence is Chaperonin GroEL (546 aa).

Residues 30–33 (TLGP), K51, 87–91 (DGTTT), G415, 479–481 (NAA), and D495 contribute to the ATP site. Residues 526-546 (KKGDSAPAGGGMGDMGGMGMM) form a disordered region. The segment covering 533-546 (AGGGMGDMGGMGMM) has biased composition (gly residues).

The protein belongs to the chaperonin (HSP60) family. Forms a cylinder of 14 subunits composed of two heptameric rings stacked back-to-back. Interacts with the co-chaperonin GroES.

It is found in the cytoplasm. It catalyses the reaction ATP + H2O + a folded polypeptide = ADP + phosphate + an unfolded polypeptide.. In terms of biological role, together with its co-chaperonin GroES, plays an essential role in assisting protein folding. The GroEL-GroES system forms a nano-cage that allows encapsulation of the non-native substrate proteins and provides a physical environment optimized to promote and accelerate protein folding. This chain is Chaperonin GroEL, found in Thioalkalivibrio sulfidiphilus (strain HL-EbGR7).